Here is a 1269-residue protein sequence, read N- to C-terminus: DNA-directed RNA polymerase subunit beta'' (1269 aa).

Residues cysteine 226, cysteine 301, cysteine 308, and cysteine 311 each coordinate Zn(2+).

This sequence belongs to the RNA polymerase beta' chain family. RpoC2 subfamily. In terms of assembly, in plastids the minimal PEP RNA polymerase catalytic core is composed of four subunits: alpha, beta, beta', and beta''. When a (nuclear-encoded) sigma factor is associated with the core the holoenzyme is formed, which can initiate transcription. The cofactor is Zn(2+).

It is found in the plastid. The protein resides in the chloroplast. The catalysed reaction is RNA(n) + a ribonucleoside 5'-triphosphate = RNA(n+1) + diphosphate. Functionally, DNA-dependent RNA polymerase catalyzes the transcription of DNA into RNA using the four ribonucleoside triphosphates as substrates. The polypeptide is DNA-directed RNA polymerase subunit beta'' (Cyanidium caldarium (Red alga)).